Consider the following 84-residue polypeptide: Anthracycline acyl carrier protein DpsG (84 aa).

A Carrier domain is found at 3–80; that stretch reads ELSLAELREI…SMLIFVNERL (78 aa). S40 is subject to O-(pantetheine 4'-phosphoryl)serine.

It functions in the pathway antibiotic biosynthesis; daunorubicin biosynthesis. The protein operates within antibiotic biosynthesis; carminomycin biosynthesis. It participates in antibiotic biosynthesis; rhodomycin biosynthesis. Its pathway is antibiotic biosynthesis; aclacinomycin biosynthesis. In terms of biological role, involved in the biosynthesis of aklanonate which is an important precursor common to the formation of the clinically significant anthracyclines such as carminomycin, daunorubicin (daunomycin), rhodomycin, aclacinomycin T (aklavin) and aclacinomycin A (aclarubicin). These compounds are aromatic polyketide antibiotics that exhibit high cytotoxicity and are widely applied in the chemotherapy of a variety of cancers. The sequence is that of Anthracycline acyl carrier protein DpsG (dpsG) from Streptomyces peucetius.